The chain runs to 276 residues: Mitochondrial outer membrane protein porin 1 (276 aa).

It belongs to the eukaryotic mitochondrial porin (TC 1.B.8.1) family. As to expression, expressed in shoot meristems, root meristematic zone, lateral roots, leaves, stigma and anthers.

It localises to the mitochondrion outer membrane. In terms of biological role, forms a channel through the mitochondrial outer membrane that allows diffusion of small hydrophilic molecules. The channel adopts an open conformation at low or zero membrane potential and a closed conformation at potentials above 30-40 mV. The open state has a weak anion selectivity whereas the closed state is cation-selective. Involved in plant development at reproductive stage, is important for pollen development and may regulate hydrogen peroxide generation during disease resistance. The polypeptide is Mitochondrial outer membrane protein porin 1 (VDAC1) (Arabidopsis thaliana (Mouse-ear cress)).